We begin with the raw amino-acid sequence, 276 residues long: Ribosomal RNA small subunit methyltransferase J (276 aa).

S-adenosyl-L-methionine is bound by residues 135 to 136 (ER) and Asp191.

The protein belongs to the methyltransferase superfamily. RsmJ family.

It localises to the cytoplasm. It carries out the reaction guanosine(1516) in 16S rRNA + S-adenosyl-L-methionine = N(2)-methylguanosine(1516) in 16S rRNA + S-adenosyl-L-homocysteine + H(+). Functionally, specifically methylates the guanosine in position 1516 of 16S rRNA. The polypeptide is Ribosomal RNA small subunit methyltransferase J (Hydrogenovibrio crunogenus (strain DSM 25203 / XCL-2) (Thiomicrospira crunogena)).